The chain runs to 305 residues: Regulator of microtubule dynamics protein 1 (305 aa).

Lysine 160 bears the N6-succinyllysine mark. TPR repeat units follow at residues 163-199 and 217-253; these read AICI…NPKD and PWYQ…DPNF. Lysine 245 is subject to N6-succinyllysine.

Belongs to the RMDN family. As to quaternary structure, interacts with microtubules.

The protein localises to the cytoplasm. It localises to the cytoskeleton. It is found in the spindle. The protein resides in the spindle pole. The sequence is that of Regulator of microtubule dynamics protein 1 (Rmdn1) from Mus musculus (Mouse).